The sequence spans 600 residues: Methionine--tRNA ligase (600 aa).

The short motif at 11 to 21 (PYANGPRHIGH) is the 'HIGH' region element. Residues C143, C146, C156, and C159 each contribute to the Zn(2+) site. Positions 350-354 (QFSSS) match the 'KMSKS' region motif. S353 contacts ATP.

Belongs to the class-I aminoacyl-tRNA synthetase family. MetG type 1 subfamily. As to quaternary structure, monomer. Zn(2+) is required as a cofactor.

The protein localises to the cytoplasm. The catalysed reaction is tRNA(Met) + L-methionine + ATP = L-methionyl-tRNA(Met) + AMP + diphosphate. Is required not only for elongation of protein synthesis but also for the initiation of all mRNA translation through initiator tRNA(fMet) aminoacylation. This chain is Methionine--tRNA ligase, found in Kineococcus radiotolerans (strain ATCC BAA-149 / DSM 14245 / SRS30216).